The following is a 122-amino-acid chain: uncharacterized protein (122 aa).

The helical transmembrane segment at 93-113 (ILRICIVFLSLKIYTLTLVII) threads the bilayer.

It is found in the membrane. This is an uncharacterized protein from Saccharomyces cerevisiae (strain ATCC 204508 / S288c) (Baker's yeast).